The sequence spans 164 residues: uncharacterized protein (164 aa).

This is an uncharacterized protein from Acanthamoeba polyphaga (Amoeba).